A 367-amino-acid polypeptide reads, in one-letter code: Mitochondrial GTPase 1 (367 aa).

The region spanning 42–228 is the CP-type G domain; the sequence is LKTFEKLLPQ…LIDTPGIGVP (187 aa). GTP is bound by residues 89 to 92, 160 to 165, and Gly-224; these read TRKD and NVGKST.

This sequence belongs to the TRAFAC class YlqF/YawG GTPase family. MTG1 subfamily.

The protein resides in the mitochondrion inner membrane. Mitochondrial GTPase involved in assembly of the large ribosomal subunit. Plays a role in expression of the mitochondrial translational machinery. In Saccharomyces cerevisiae (strain ATCC 204508 / S288c) (Baker's yeast), this protein is Mitochondrial GTPase 1 (MTG1).